The primary structure comprises 305 residues: Aspartate carbamoyltransferase catalytic subunit (305 aa).

Carbamoyl phosphate contacts are provided by arginine 58 and threonine 59. L-aspartate is bound at residue lysine 86. Residues arginine 108, histidine 136, and glutamine 139 each coordinate carbamoyl phosphate. Positions 169 and 223 each coordinate L-aspartate. Glycine 264 and proline 265 together coordinate carbamoyl phosphate.

This sequence belongs to the aspartate/ornithine carbamoyltransferase superfamily. ATCase family. In terms of assembly, heterododecamer (2C3:3R2) of six catalytic PyrB chains organized as two trimers (C3), and six regulatory PyrI chains organized as three dimers (R2).

It catalyses the reaction carbamoyl phosphate + L-aspartate = N-carbamoyl-L-aspartate + phosphate + H(+). It participates in pyrimidine metabolism; UMP biosynthesis via de novo pathway; (S)-dihydroorotate from bicarbonate: step 2/3. Its function is as follows. Catalyzes the condensation of carbamoyl phosphate and aspartate to form carbamoyl aspartate and inorganic phosphate, the committed step in the de novo pyrimidine nucleotide biosynthesis pathway. This Syntrophobacter fumaroxidans (strain DSM 10017 / MPOB) protein is Aspartate carbamoyltransferase catalytic subunit.